The following is a 122-amino-acid chain: Large ribosomal subunit protein uL14c (122 aa).

It belongs to the universal ribosomal protein uL14 family. Part of the 50S ribosomal subunit.

It localises to the plastid. Its subcellular location is the chloroplast. Functionally, binds to 23S rRNA. In Citrus sinensis (Sweet orange), this protein is Large ribosomal subunit protein uL14c.